The sequence spans 291 residues: Ribose-phosphate pyrophosphokinase (291 aa).

ATP contacts are provided by residues 34–36 (DGE) and 93–94 (RQ). Mg(2+) contacts are provided by histidine 127 and aspartate 165. The active site involves lysine 188. Residues arginine 190, aspartate 216, and 220-224 (STGGT) contribute to the D-ribose 5-phosphate site.

This sequence belongs to the ribose-phosphate pyrophosphokinase family. Class III (archaeal) subfamily. As to quaternary structure, homodimer. Mg(2+) is required as a cofactor.

The protein resides in the cytoplasm. It catalyses the reaction D-ribose 5-phosphate + ATP = 5-phospho-alpha-D-ribose 1-diphosphate + AMP + H(+). The protein operates within metabolic intermediate biosynthesis; 5-phospho-alpha-D-ribose 1-diphosphate biosynthesis; 5-phospho-alpha-D-ribose 1-diphosphate from D-ribose 5-phosphate (route I): step 1/1. Its function is as follows. Involved in the biosynthesis of the central metabolite phospho-alpha-D-ribosyl-1-pyrophosphate (PRPP) via the transfer of pyrophosphoryl group from ATP to 1-hydroxyl of ribose-5-phosphate (Rib-5-P). This is Ribose-phosphate pyrophosphokinase from Saccharolobus solfataricus (strain ATCC 35092 / DSM 1617 / JCM 11322 / P2) (Sulfolobus solfataricus).